An 815-amino-acid chain; its full sequence is Protein-glutamine gamma-glutamyltransferase K (815 aa).

Basic and acidic residues predominate over residues 1–10 (MEGPRSDVGR). Disordered stretches follow at residues 1–48 (MEGP…SFWA) and 62–101 (DDWGPEPSGSRSRGTSSRGRDSRGGRRPESRGSGVNAAGD). The span at 16–25 (WQPPTTPSPE) shows a compositional bias: pro residues. T21 is subject to Phosphothreonine. Residues S23, S71, S83, S91, and S94 each carry the phosphoserine modification. A compositionally biased stretch (low complexity) spans 66-78 (PEPSGSRSRGTSS). Residues 79–91 (RGRDSRGGRRPES) show a composition bias toward basic and acidic residues. Active-site residues include C376, H435, and D458. Residues N498, D500, E547, and E552 each contribute to the Ca(2+) site. Residues 791–815 (GSGFSDAGGDSRSGENIPMAYRGGA) are disordered. A Phosphoserine modification is found at S803.

The protein belongs to the transglutaminase superfamily. Transglutaminase family. Interacts with PLAAT4. Ca(2+) serves as cofactor. Post-translationally, tyrosine-phosphorylated. Palmitoylated. In terms of processing, the membrane anchorage region possesses a cluster of five cysteines within which fatty acid(s) may become thioester-linked. It is subject to phorbol ester-stimulated phosphorylation and is hypersensitive to proteolysis, which releases the enzyme in a soluble form. In terms of tissue distribution, expressed in large amounts in epithelial tissues (lung, liver and kidney).

It is found in the membrane. The catalysed reaction is L-glutaminyl-[protein] + L-lysyl-[protein] = [protein]-L-lysyl-N(6)-5-L-glutamyl-[protein] + NH4(+). In terms of biological role, catalyzes the cross-linking of proteins and the conjugation of polyamines to proteins. Responsible for cross-linking epidermal proteins during formation of the stratum corneum. Involved in cell proliferation. The protein is Protein-glutamine gamma-glutamyltransferase K (Tgm1) of Mus musculus (Mouse).